We begin with the raw amino-acid sequence, 737 residues long: Acetylcholinesterase (737 aa).

A signal peptide spans 1–38 (MEIRGLLMGRLRLGRRMVPLGLLGVTALLLILPPFALV). The interval 141–168 (HSGATPRRRGLTRRESNSDANDNDPLVV) is disordered. Asn-220 carries N-linked (GlcNAc...) asparagine glycosylation. Cys-228 and Cys-255 form a disulfide bridge. Ser-360 (acyl-ester intermediate) is an active-site residue. A disulfide bridge links Cys-414 with Cys-427. Residues Glu-486 and His-600 each act as charge relay system in the active site. A disulfide bridge connects residues Cys-562 and Cys-683. A glycan (N-linked (GlcNAc...) asparagine) is linked at Asn-670.

Belongs to the type-B carboxylesterase/lipase family.

It is found in the synapse. The catalysed reaction is acetylcholine + H2O = choline + acetate + H(+). Functionally, rapidly hydrolyzes choline released into the synapse. This is Acetylcholinesterase (Ace) from Anopheles gambiae (African malaria mosquito).